The sequence spans 267 residues: WUSCHEL-related homeobox 8 (267 aa).

The segment at residues 88-152 is a DNA-binding region (homeobox; WUS-type); it reads TARQRWTPTP…NRRARSKRKQ (65 aa). Residues 148–195 form a disordered region; sequence SKRKQAALPNNNAESEAEADEESPTDKKPKSDRPLHQNIAMRDHNSER. Over residues 171–195 the composition is skewed to basic and acidic residues; that stretch reads PTDKKPKSDRPLHQNIAMRDHNSER.

It belongs to the WUS homeobox family.

The protein resides in the nucleus. Transcription factor which may be involved in developmental processes. In Oryza sativa subsp. japonica (Rice), this protein is WUSCHEL-related homeobox 8 (WOX8).